The primary structure comprises 238 residues: Uridylate kinase (238 aa).

Position 12 to 15 (12 to 15 (KLSG)) interacts with ATP. The segment at 20–25 (GQQGFG) is involved in allosteric activation by GTP. Residue G54 coordinates UMP. Positions 55 and 59 each coordinate ATP. UMP-binding positions include D74 and 135-142 (TGNPFFTT). T162, N163, Y168, and D171 together coordinate ATP.

The protein belongs to the UMP kinase family. As to quaternary structure, homohexamer.

It is found in the cytoplasm. It carries out the reaction UMP + ATP = UDP + ADP. It functions in the pathway pyrimidine metabolism; CTP biosynthesis via de novo pathway; UDP from UMP (UMPK route): step 1/1. With respect to regulation, allosterically activated by GTP. Inhibited by UTP. Functionally, catalyzes the reversible phosphorylation of UMP to UDP. In Bradyrhizobium diazoefficiens (strain JCM 10833 / BCRC 13528 / IAM 13628 / NBRC 14792 / USDA 110), this protein is Uridylate kinase.